The sequence spans 680 residues: Probable galacturonosyltransferase 3 (680 aa).

Residues 1–6 (MTTFST) are Cytoplasmic-facing. A helical; Signal-anchor for type II membrane protein transmembrane segment spans residues 7–27 (CAAFLSLVVVLHAVHVGGAIL). The Lumenal segment spans residues 28–680 (ESQAPHRELK…PYLRRCDINE (653 aa)). Residues 118-146 (SFQNDTGMEDNASHSTTNQTDESENQFPN) form a disordered region. Residues Asn121, Asn128, Asn135, Asn239, Asn386, Asn438, Asn545, Asn578, Asn610, and Asn631 are each glycosylated (N-linked (GlcNAc...) asparagine). A compositionally biased stretch (polar residues) spans 130 to 145 (SHSTTNQTDESENQFP).

Belongs to the glycosyltransferase 8 family. Expressed in roots, inflorescences, siliques, leaves and stems.

The protein resides in the golgi apparatus membrane. Its pathway is glycan metabolism; pectin biosynthesis. In terms of biological role, may be involved in pectin and/or xylans biosynthesis in cell walls. This Arabidopsis thaliana (Mouse-ear cress) protein is Probable galacturonosyltransferase 3 (GAUT3).